A 423-amino-acid polypeptide reads, in one-letter code: WD repeat and SOCS box-containing protein 1 (423 aa).

The tract at residues 76-100 is disordered; the sequence is DRSSGAGPRRLSRQNSEGSLLPGEP. 5 WD repeats span residues 125 to 166, 169 to 209, 213 to 252, 255 to 294, and 310 to 347; these read SRCV…LLLN, DHTD…NMVK, GHQNWVYCSAFSPDSSVLCSVGAGKAVFLWDMDKYTLIRK, GHHNDVVCCEFSPDGALLATASYDTRVIVWDPHTATVLLE, and ANDRWVRSVAFCHDGRHIASVTDDRLVRFWSIDEKSPQ. Positions 373-423 constitute an SOCS box domain; the sequence is DGSVHFWASPRSIASLQHLCRMTLRRVMPTQQVYTLPIPFSMQDYLAYKTL.

Component of a probable ECS E3 ubiquitin-protein ligase complex that contains the Elongin BC complex.

The protein operates within protein modification; protein ubiquitination. Its function is as follows. Probable substrate-recognition component of a SCF-like ECS (Elongin-Cullin-SOCS-box protein) E3 ubiquitin-protein ligase complex which mediates the ubiquitination and subsequent proteasomal degradation of target proteins. The sequence is that of WD repeat and SOCS box-containing protein 1 (wsb1) from Danio rerio (Zebrafish).